Here is a 118-residue protein sequence, read N- to C-terminus: Acidic phospholipase A2 PA-3 (118 aa).

Disulfide bonds link cysteine 11-cysteine 71, cysteine 27-cysteine 117, cysteine 29-cysteine 45, cysteine 44-cysteine 98, cysteine 51-cysteine 91, cysteine 60-cysteine 84, and cysteine 78-cysteine 89. Ca(2+) is bound by residues tyrosine 28, glycine 30, and glycine 32. Residue histidine 48 is part of the active site. Aspartate 49 is a Ca(2+) binding site. Residue aspartate 92 is part of the active site.

This sequence belongs to the phospholipase A2 family. Group I subfamily. D49 sub-subfamily. Requires Ca(2+) as cofactor. As to expression, expressed by the venom gland.

Its subcellular location is the secreted. The enzyme catalyses a 1,2-diacyl-sn-glycero-3-phosphocholine + H2O = a 1-acyl-sn-glycero-3-phosphocholine + a fatty acid + H(+). Its function is as follows. PLA2 catalyzes the calcium-dependent hydrolysis of the 2-acyl groups in 3-sn-phosphoglycerides. This chain is Acidic phospholipase A2 PA-3, found in Pseudechis australis (Mulga snake).